Reading from the N-terminus, the 383-residue chain is Lipid-A-disaccharide synthase (383 aa).

The protein belongs to the LpxB family.

The catalysed reaction is 2-N,3-O-bis[(3R)-3-hydroxytetradecanoyl]-alpha-D-glucosaminyl 1-phosphate + UDP-2-N,3-O-bis[(3R)-3-hydroxytetradecanoyl]-alpha-D-glucosamine = lipid A disaccharide (E. coli) + UDP + H(+). It catalyses the reaction a lipid X + a UDP-2-N,3-O-bis[(3R)-3-hydroxyacyl]-alpha-D-glucosamine = a lipid A disaccharide + UDP + H(+). Its pathway is glycolipid biosynthesis; lipid IV(A) biosynthesis; lipid IV(A) from (3R)-3-hydroxytetradecanoyl-[acyl-carrier-protein] and UDP-N-acetyl-alpha-D-glucosamine: step 5/6. Its function is as follows. Condensation of UDP-2,3-diacylglucosamine and 2,3-diacylglucosamine-1-phosphate to form lipid A disaccharide, a precursor of lipid A, a phosphorylated glycolipid that anchors the lipopolysaccharide to the outer membrane of the cell. This is Lipid-A-disaccharide synthase from Klebsiella pneumoniae (strain 342).